The chain runs to 293 residues: GTP cyclohydrolase FolE2 (293 aa).

It belongs to the GTP cyclohydrolase IV family.

The catalysed reaction is GTP + H2O = 7,8-dihydroneopterin 3'-triphosphate + formate + H(+). The protein operates within cofactor biosynthesis; 7,8-dihydroneopterin triphosphate biosynthesis; 7,8-dihydroneopterin triphosphate from GTP: step 1/1. Functionally, converts GTP to 7,8-dihydroneopterin triphosphate. This chain is GTP cyclohydrolase FolE2, found in Pseudomonas entomophila (strain L48).